The chain runs to 430 residues: Enolase (430 aa).

Gln167 is a binding site for (2R)-2-phosphoglycerate. Glu209 serves as the catalytic Proton donor. The Mg(2+) site is built by Asp246, Glu287, and Asp314. (2R)-2-phosphoglycerate is bound by residues Lys339, Arg368, and Ser369. Lys339 (proton acceptor) is an active-site residue.

This sequence belongs to the enolase family. Mg(2+) serves as cofactor.

The protein resides in the cytoplasm. Its subcellular location is the secreted. It is found in the cell surface. It carries out the reaction (2R)-2-phosphoglycerate = phosphoenolpyruvate + H2O. Its pathway is carbohydrate degradation; glycolysis; pyruvate from D-glyceraldehyde 3-phosphate: step 4/5. In terms of biological role, catalyzes the reversible conversion of 2-phosphoglycerate (2-PG) into phosphoenolpyruvate (PEP). It is essential for the degradation of carbohydrates via glycolysis. This is Enolase from Synechococcus sp. (strain ATCC 27144 / PCC 6301 / SAUG 1402/1) (Anacystis nidulans).